Reading from the N-terminus, the 301-residue chain is UDP-N-acetylenolpyruvoylglucosamine reductase (301 aa).

In terms of domain architecture, FAD-binding PCMH-type spans 26-193 (KTGGPAQYLA…VSATFGLEPG (168 aa)). R172 is an active-site residue. S222 (proton donor) is an active-site residue. The active site involves E292.

This sequence belongs to the MurB family. Requires FAD as cofactor.

The protein localises to the cytoplasm. The enzyme catalyses UDP-N-acetyl-alpha-D-muramate + NADP(+) = UDP-N-acetyl-3-O-(1-carboxyvinyl)-alpha-D-glucosamine + NADPH + H(+). The protein operates within cell wall biogenesis; peptidoglycan biosynthesis. In terms of biological role, cell wall formation. The polypeptide is UDP-N-acetylenolpyruvoylglucosamine reductase (Lactobacillus johnsonii (strain CNCM I-12250 / La1 / NCC 533)).